The primary structure comprises 710 residues: E3 ubiquitin-protein ligase TRIM9 (710 aa).

The segment at 10–50 (CPVCGSFYREPIILPCSHNICQACARNILVQTPESESPQSR) adopts an RING-type zinc-finger fold. Residue Thr-41 is modified to Phosphothreonine. 4 positions are modified to phosphoserine: Ser-44, Ser-46, Ser-49, and Ser-53. 2 B box-type zinc fingers span residues 163–212 (AAAL…LVPP) and 224–266 (RKVS…VKAL). Residues Cys-168, Cys-171, Cys-193, His-198, Cys-229, His-232, Cys-252, and His-258 each contribute to the Zn(2+) site. A coiled-coil region spans residues 273–340 (HKSQLSQALN…KAQLLARVNK (68 aa)). In terms of domain architecture, COS spans 374-432 (IKENDPSGFLQISDALIRRVHLTEDQWGKGTLTPRMTTDFDLSLDNSPLLQSIHQLDFV). A Fibronectin type-III domain is found at 440–535 (VPATPILQLE…KTLVLQTSEV (96 aa)). Positions 533 to 702 (SEVAWFAFDP…LHTGLQVPDF (170 aa)) constitute a B30.2/SPRY domain.

The protein belongs to the TRIM/RBCC family. As to quaternary structure, interacts with SNAP25. In terms of processing, auto-ubiquitinated.

Its subcellular location is the cytoplasm. The protein resides in the cell projection. The protein localises to the dendrite. It is found in the cytoplasmic vesicle. It localises to the secretory vesicle. Its subcellular location is the synaptic vesicle. The protein resides in the synapse. The protein localises to the cytoskeleton. It carries out the reaction S-ubiquitinyl-[E2 ubiquitin-conjugating enzyme]-L-cysteine + [acceptor protein]-L-lysine = [E2 ubiquitin-conjugating enzyme]-L-cysteine + N(6)-ubiquitinyl-[acceptor protein]-L-lysine.. It functions in the pathway protein modification; protein ubiquitination. Functionally, E3 ubiquitin-protein ligase which ubiquitinates itself in cooperation with an E2 enzyme UBE2D2/UBC4 and serves as a targeting signal for proteasomal degradation. May play a role in regulation of neuronal functions. May act as a regulator of synaptic vesicle exocytosis by controlling the availability of SNAP25 for the SNARE complex formation. The chain is E3 ubiquitin-protein ligase TRIM9 (TRIM9) from Bos taurus (Bovine).